Reading from the N-terminus, the 79-residue chain is Small ribosomal subunit protein uS17 (79 aa).

It belongs to the universal ribosomal protein uS17 family. In terms of assembly, part of the 30S ribosomal subunit.

Functionally, one of the primary rRNA binding proteins, it binds specifically to the 5'-end of 16S ribosomal RNA. This Rhizobium etli (strain ATCC 51251 / DSM 11541 / JCM 21823 / NBRC 15573 / CFN 42) protein is Small ribosomal subunit protein uS17.